We begin with the raw amino-acid sequence, 406 residues long: Kelch domain-containing protein 2 (406 aa).

Kelch repeat units follow at residues 31–85, 92–136, 148–207, 221–259, 271–311, and 322–359; these read ERSG…NTEG, SGSC…ERID, LGVW…AWSQ, HACA…NELI, HSLT…IQFN, and HTAC…IFSV.

As to quaternary structure, component of a CRL2(KLHDC2) E3 ubiquitin-protein ligase complex, also named ECS(KLHDC2) complex, composed of CUL2, Elongin BC (ELOB and ELOC), RBX1 and substrate-specific adapter KLHDC2. May form oligomers as a KLHDC2-ELOB-ELOC complex; this interaction is autoinhibitory for the E3 ligase complex as the substrate-binding site of KLHDC2 is blocked in the oligomer. Interacts with CREB3; interaction is direct and specific as it does not interact with CREB1, ATF4, ATF6, JUN, FOS, CEBPA or herpes simplex virus transactivator VP16. Post-translationally, autoubiquitinated by the CRL2(KLHDC2) E3 ligase complex.

Its subcellular location is the nucleus. It participates in protein modification; protein ubiquitination. Substrate-recognition component of a Cul2-RING (CRL2) E3 ubiquitin-protein ligase complex of the DesCEND (destruction via C-end degrons) pathway, which recognizes a C-degron located at the extreme C terminus of target proteins, leading to their ubiquitination and degradation. The C-degron recognized by the DesCEND pathway is usually a motif of less than ten residues and can be present in full-length proteins, truncated proteins or proteolytically cleaved forms. The CRL2(KLHDC2) complex specifically recognizes proteins with a diglycine (Gly-Gly) at the C-terminus, leading to their ubiquitination and degradation. The CRL2(KLHDC2) complex mediates ubiquitination and degradation of truncated SELENOK and SELENOS selenoproteins produced by failed UGA/Sec decoding, which end with a diglycine. The CRL2(KLHDC2) complex also recognizes proteolytically cleaved proteins ending with Gly-Gly, such as the N-terminal fragment of USP1, leading to their degradation. May also act as an indirect repressor of CREB3-mediated transcription by interfering with CREB3-DNA-binding. The chain is Kelch domain-containing protein 2 from Mus musculus (Mouse).